A 276-amino-acid chain; its full sequence is Putative pyruvate, phosphate dikinase regulatory protein (276 aa).

ADP is bound at residue 154–161 (GVSRTSKS).

This sequence belongs to the pyruvate, phosphate/water dikinase regulatory protein family. PDRP subfamily.

The catalysed reaction is N(tele)-phospho-L-histidyl/L-threonyl-[pyruvate, phosphate dikinase] + ADP = N(tele)-phospho-L-histidyl/O-phospho-L-threonyl-[pyruvate, phosphate dikinase] + AMP + H(+). It catalyses the reaction N(tele)-phospho-L-histidyl/O-phospho-L-threonyl-[pyruvate, phosphate dikinase] + phosphate + H(+) = N(tele)-phospho-L-histidyl/L-threonyl-[pyruvate, phosphate dikinase] + diphosphate. Its function is as follows. Bifunctional serine/threonine kinase and phosphorylase involved in the regulation of the pyruvate, phosphate dikinase (PPDK) by catalyzing its phosphorylation/dephosphorylation. The sequence is that of Putative pyruvate, phosphate dikinase regulatory protein from Wolbachia pipientis wMel.